A 1159-amino-acid polypeptide reads, in one-letter code: WASH complex subunit 5 (1159 aa).

This sequence belongs to the strumpellin family. In terms of assembly, component of the WASH core complex also described as WASH regulatory complex (SHRC) composed of WASH (WASHC1, WASH2P or WASH3P), WASHC2 (WASHC2A or WASHC2C), WASHC3, WASHC4 and WASHC5. The WASH core complex associates via WASHC2 with the F-actin-capping protein dimer (formed by CAPZA1, CAPZA2 or CAPZA3 and CAPZB) in a transient or substoichiometric manner which was initially described as WASH complex. Interacts with VCP, PI4K2A.

It localises to the cytoplasm. It is found in the cytosol. The protein resides in the endoplasmic reticulum. Its subcellular location is the early endosome. Its function is as follows. Acts as a component of the WASH core complex that functions as a nucleation-promoting factor (NPF) at the surface of endosomes, where it recruits and activates the Arp2/3 complex to induce actin polymerization, playing a key role in the fission of tubules that serve as transport intermediates during endosome sorting. May be involved in axonal outgrowth. Involved in cellular localization of ADRB2. Involved in cellular trafficking of BLOC-1 complex cargos such as ATP7A and VAMP7. Involved in cytokinesis and following polar body extrusion during oocyte meiotic maturation. This chain is WASH complex subunit 5, found in Mus musculus (Mouse).